A 402-amino-acid polypeptide reads, in one-letter code: Multidrug resistance protein MdtH (402 aa).

Topologically, residues 1-12 are cytoplasmic; the sequence is MSRVSQARNLGK. The chain crosses the membrane as a helical span at residues 13 to 33; the sequence is YFLLIDNMLVVLGFFVVFPLI. Residues 34–98 are Periplasmic-facing; sequence SIRFIDQMGW…GFATMGIAHE (65 aa). The chain crosses the membrane as a helical span at residues 99–116; the sequence is PWLLWFSCFLSGLGGTLF. At 117 to 138 the chain is on the cytoplasmic side; sequence DPPRSALVVKLIRPEQRGRFFS. Residues 139-159 form a helical membrane-spanning segment; that stretch reads LLMMQDSAGAVIGALLGSWLL. At 160–164 the chain is on the periplasmic side; that stretch reads QYDFR. The chain crosses the membrane as a helical span at residues 165 to 185; that stretch reads LVCATGAILFILCALFNAWLL. At 186–213 the chain is on the cytoplasmic side; the sequence is PAWKLSTVRTPVREGMRRVMSDKRFVTY. Residues 214–234 form a helical membrane-spanning segment; that stretch reads VLTLAGYYMLAVQVMLMLPIM. At 235 to 243 the chain is on the periplasmic side; sequence VNDIAGSPA. Residues 244–264 traverse the membrane as a helical segment; sequence AVKWMYAIEACLSLTLLYPIA. Residues 265–276 lie on the Cytoplasmic side of the membrane; sequence RWSEKRFRLEHR. The helical transmembrane segment at 277–297 threads the bilayer; sequence LMAGLLVMSLSMIPIGMVGNL. Residues 298–299 lie on the Periplasmic side of the membrane; sequence QQ. A helical transmembrane segment spans residues 300–320; the sequence is LFTLICAFYIGSVIAEPARET. Residues 321-339 lie on the Cytoplasmic side of the membrane; the sequence is LSASLADARARGSYMGFSR. The chain crosses the membrane as a helical span at residues 340–360; the sequence is LGLAIGGAIGYIGGGWLFDMG. The Periplasmic segment spans residues 361–367; that stretch reads KALTQPE. A helical membrane pass occupies residues 368–388; sequence LPWMMLGIIGFITFLALGWQF. At 389–402 the chain is on the cytoplasmic side; the sequence is SHKRTPRRMLEPGA.

The protein belongs to the major facilitator superfamily. DHA1 family. MdtH (TC 2.A.1.2.21) subfamily.

Its subcellular location is the cell inner membrane. The protein is Multidrug resistance protein MdtH of Salmonella paratyphi C (strain RKS4594).